The primary structure comprises 230 residues: Agamous-like MADS-box protein AGL11 (230 aa).

The 55-residue stretch at 3-57 folds into the MADS-box domain; that stretch reads RGKIEIKRIENSTNRQVTFCKRRNGLLKKAYELSVLCDAEVALIVFSTRGRLYEY. Residues 87–177 enclose the K-box domain; sequence AAYYQQESAK…RTKVAEVERY (91 aa). Positions 211–230 are disordered; the sequence is SGSGNGGSYSDPDKKILHLG. A compositionally biased stretch (basic and acidic residues) spans 221–230; it reads DPDKKILHLG.

As to quaternary structure, interacts with AGL15 and AGL16.

It localises to the nucleus. In terms of biological role, probable transcription factor. Is required, together with TT16/AGL32 for the maternal control of endothelium formation, which is essential for female gametophyte development and fertilization, and seed formation. The sequence is that of Agamous-like MADS-box protein AGL11 (AGL11) from Arabidopsis thaliana (Mouse-ear cress).